The primary structure comprises 48 residues: Large ribosomal subunit protein bL34c (48 aa).

Residues 18–48 (SGFRSRMATPQGRKTIRNRRKKGRKNLTLRR) form a disordered region. Basic residues predominate over residues 31 to 48 (KTIRNRRKKGRKNLTLRR).

This sequence belongs to the bacterial ribosomal protein bL34 family.

It localises to the plastid. It is found in the chloroplast. This Phaeodactylum tricornutum (strain CCAP 1055/1) protein is Large ribosomal subunit protein bL34c.